A 258-amino-acid polypeptide reads, in one-letter code: 14-3-3-like protein F (258 aa).

The protein belongs to the 14-3-3 family.

The protein is 14-3-3-like protein F of Nicotiana tabacum (Common tobacco).